The sequence spans 147 residues: uncharacterized protein (147 aa).

The protein belongs to the RTX toxin acyltransferase family.

This is an uncharacterized protein from Synechocystis sp. (strain ATCC 27184 / PCC 6803 / Kazusa).